Here is a 71-residue protein sequence, read N- to C-terminus: Large ribosomal subunit protein bL31 (71 aa).

This sequence belongs to the bacterial ribosomal protein bL31 family. Type A subfamily. As to quaternary structure, part of the 50S ribosomal subunit.

Binds the 23S rRNA. This Metamycoplasma arthritidis (strain 158L3-1) (Mycoplasma arthritidis) protein is Large ribosomal subunit protein bL31.